The sequence spans 427 residues: mRNA cap guanine-N(7) methyltransferase (427 aa).

Residues 1 to 79 (MSLNYEQNAA…EPETEAASGA (79 aa)) form a disordered region. Residues Ser-22, Ser-24, Ser-29, Ser-46, and Ser-48 each carry the phosphoserine modification. A compositionally biased stretch (basic and acidic residues) spans 44–57 (HVSKSPREYYDEPG). The mRNA cap 0 methyltransferase domain occupies 103–411 (SKIFFMRNFN…LYLVCAFKKC (309 aa)). Position 112–113 (112–113 (NN)) interacts with mRNA. S-adenosyl-L-methionine is bound by residues Lys-116, Cys-143, Asp-165, Asp-202, Gln-225, and Tyr-230.

This sequence belongs to the class I-like SAM-binding methyltransferase superfamily. mRNA cap 0 methyltransferase family.

It localises to the nucleus. It carries out the reaction a 5'-end (5'-triphosphoguanosine)-ribonucleoside in mRNA + S-adenosyl-L-methionine = a 5'-end (N(7)-methyl 5'-triphosphoguanosine)-ribonucleoside in mRNA + S-adenosyl-L-homocysteine. Functionally, mRNA-capping methyltransferase that methylates the N7 position of the added guanosine to the 5'-cap structure of mRNAs. Binds RNA containing 5'-terminal GpppC. The chain is mRNA cap guanine-N(7) methyltransferase from Drosophila melanogaster (Fruit fly).